The following is a 546-amino-acid chain: Chaperonin GroEL 1 (546 aa).

Residues threonine 30–proline 33, lysine 51, aspartate 87–threonine 91, glycine 415, and aspartate 495 each bind ATP. Residues aspartate 527–phenylalanine 546 form a disordered region. The span at glycine 535–phenylalanine 546 shows a compositional bias: gly residues.

The protein belongs to the chaperonin (HSP60) family. Forms a cylinder of 14 subunits composed of two heptameric rings stacked back-to-back. Interacts with the co-chaperonin GroES.

It localises to the cytoplasm. The enzyme catalyses ATP + H2O + a folded polypeptide = ADP + phosphate + an unfolded polypeptide.. In terms of biological role, together with its co-chaperonin GroES, plays an essential role in assisting protein folding. The GroEL-GroES system forms a nano-cage that allows encapsulation of the non-native substrate proteins and provides a physical environment optimized to promote and accelerate protein folding. In Burkholderia lata (strain ATCC 17760 / DSM 23089 / LMG 22485 / NCIMB 9086 / R18194 / 383), this protein is Chaperonin GroEL 1.